Consider the following 605-residue polypeptide: Indole-3-acetic acid-amido synthetase GH3.8 (605 aa).

AMP is bound by residues Ser115, 342-346, Tyr365, Asp421, and Arg440; that span reads MYASS.

It belongs to the IAA-amido conjugating enzyme family. In terms of tissue distribution, expressed in the inner floral organs (lodicules, stamens and carpels) and at lower levels in lemmas and paleas.

Functionally, catalyzes the synthesis of indole-3-acetic acid (IAA)-amino acid conjugates, providing a mechanism for the plant to cope with the presence of excessive free auxin. Produces more IAA-Asp levels than IAA-Ala levels in vitro. May participate in the activation of disease resistance by preventing the accumulation of free IAA, which reduces the expression of a group of auxin-responsive genes encoding expansins that control cell wall loosening and expansion. Contributes to late events in stamen and carpel differentiation, and influences floret fertility. The polypeptide is Indole-3-acetic acid-amido synthetase GH3.8 (GH3.8) (Oryza sativa subsp. indica (Rice)).